The sequence spans 963 residues: Aminopeptidase N (963 aa).

Over 2-8 the chain is Cytoplasmic; it reads AKGFYIS. Residues 9–32 traverse the membrane as a helical; Signal-anchor for type II membrane protein segment; that stretch reads KALGILGILLGVAAVATIIALSVV. Residues 33–64 form a cytosolic Ser/Thr-rich junction region; it reads YAQEKNKNAEHVPQAPTSPTITTTAAITLDQS. Over 33-963 the chain is Extracellular; that stretch reads YAQEKNKNAE…VVLNWFIEHS (931 aa). The tract at residues 65–963 is metalloprotease; that stretch reads KPWNRYRLPT…VVLNWFIEHS (899 aa). 2 N-linked (GlcNAc...) asparagine glycosylation sites follow: asparagine 82 and asparagine 124. Tyrosine 171 bears the Sulfotyrosine mark. N-linked (GlcNAc...) asparagine glycans are attached at residues asparagine 229, asparagine 237, asparagine 258, asparagine 286, asparagine 314, and asparagine 328. Residue 347-351 participates in substrate binding; it reads GAMEN. Histidine 383 is a binding site for Zn(2+). Catalysis depends on glutamate 384, which acts as the Proton acceptor. Residues histidine 387 and glutamate 406 each contribute to the Zn(2+) site. N-linked (GlcNAc...) asparagine glycans are attached at residues asparagine 506, asparagine 556, asparagine 569, asparagine 622, asparagine 646, and asparagine 736. The interval 717-813 is interaction with TGEV spike glycoprotein; the sequence is KYLRKQVEPL…DQWDFAWGQL (97 aa). Intrachain disulfides connect cysteine 758–cysteine 765 and cysteine 795–cysteine 831.

Belongs to the peptidase M1 family. Homodimer. Interacts with SLC6A19. As to quaternary structure, (Microbial infection) Interacts with TGEV and PRCoV spike glycoprotein. The cofactor is Zn(2+). Sulfated. In terms of processing, N- and O-glycosylated. Post-translationally, may undergo proteolysis and give rise to a soluble form.

It localises to the cell membrane. It catalyses the reaction Release of an N-terminal amino acid, Xaa-|-Yaa- from a peptide, amide or arylamide. Xaa is preferably Ala, but may be most amino acids including Pro (slow action). When a terminal hydrophobic residue is followed by a prolyl residue, the two may be released as an intact Xaa-Pro dipeptide.. Functionally, broad specificity aminopeptidase which plays a role in the final digestion of peptides generated from hydrolysis of proteins by gastric and pancreatic proteases. Also involved in the processing of various peptides including peptide hormones, such as angiotensin III and IV, neuropeptides, and chemokines. May also be involved the cleavage of peptides bound to major histocompatibility complex class II molecules of antigen presenting cells. May have a role in angiogenesis and promote cholesterol crystallization. It is able to degrade Leu-enkephalin and Met-enkephalin but not cholecystokinin CCK8, neuromedin C (GRP-10), somatostatin-14, substance P and vasoactive intestinal peptide. May have a role in amino acid transport by acting as binding partner of amino acid transporter SLC6A19 and regulating its activity. (Microbial infection) In case of porcine transmissible gastroenteritis coronavirus (TGEV) and porcine respiratory coronavirus (PRCoV) infections, serves as a receptor for TGEV and PRCoV spike glycoprotein in a species-specific manner. The polypeptide is Aminopeptidase N (ANPEP) (Sus scrofa (Pig)).